A 1448-amino-acid polypeptide reads, in one-letter code: DNA primase TraC (1448 aa).

3 stretches are compositionally biased toward basic and acidic residues: residues 844-856 (ARVQ…RDPN), 863-872 (SAAKEARKTA), and 882-898 (DAQR…RDRQ). Disordered regions lie at residues 844–915 (ARVQ…INVP) and 952–982 (QGAA…QQAQ). The segment covering 964–982 (AQPAPEAQGEAQKPAQQAQ) has biased composition (low complexity). The region spanning 1237–1325 (PALVISEGYA…GKAIFPIFAP (89 aa)) is the Toprim domain. The segment at 1414–1448 (ISQVQRDEQQHQEQKHVEKKQQQIEQRPRRAARIG) is disordered. Residues 1418–1441 (QRDEQQHQEQKHVEKKQQQIEQRP) show a composition bias toward basic and acidic residues.

Required for autonomous replication in E.coli. Transferred into the recipient cell during bacterial conjugation. Catalyzes the synthesis of short oligoribonucleotide primers with CpA or pCpA at their 5'-termini on a single-stranded template DNA. The sequence is that of DNA primase TraC (traC) from Escherichia coli.